A 326-amino-acid polypeptide reads, in one-letter code: NAD-dependent protein deacylase SIR5 (326 aa).

The transit peptide at 1-26 (MRLLRPTPRLSSIFSSKTATSNLRFF) directs the protein to the mitochondrion. Residues 28–324 (AMAPHNDVGA…IGKLETDKKE (297 aa)) enclose the Deacetylase sirtuin-type domain. Position 53–72 (53–72 (GAGLSASSGLPTFRGAGGLW)) interacts with NAD(+). Substrate-binding residues include tyrosine 97 and arginine 100. Residue histidine 151 is the Proton acceptor of the active site. Zn(2+)-binding residues include cysteine 159, cysteine 162, cysteine 211, and cysteine 214.

This sequence belongs to the sirtuin family. Class I subfamily. In terms of assembly, interacts with LAT1; the interaction is direct. It depends on Zn(2+) as a cofactor.

The protein localises to the mitochondrion. It localises to the cytoplasm. The protein resides in the cytosol. It is found in the nucleus. Its subcellular location is the chromosome. The catalysed reaction is N(6)-acetyl-L-lysyl-[protein] + NAD(+) + H2O = 2''-O-acetyl-ADP-D-ribose + nicotinamide + L-lysyl-[protein]. It catalyses the reaction N(6)-(2E)-butenoyl-L-lysyl-[protein] + H2O = (2E)-2-butenoate + L-lysyl-[protein]. In terms of biological role, NAD-dependent protein-lysine deacylase that decrotonylates the PDC (pyruvate dehydrogenase complex) subunit LAT1 at 'Lys-148' to inhibit PDC activity and consequently ATP production. Also decrotonylates histone H3 crotonylated at 'Lys-18' (H3K18cr), to repress the expression of genes involved in aerobic respiration. May also act as a NAD-dependent deacetylase. Does not mediate desuccinylation, demalonylation, or deglutarylation of LAT1. This Fusarium oxysporum f. sp. lycopersici (strain 4287 / CBS 123668 / FGSC 9935 / NRRL 34936) (Fusarium vascular wilt of tomato) protein is NAD-dependent protein deacylase SIR5.